We begin with the raw amino-acid sequence, 462 residues long: Calcitonin gene-related peptide type 1 receptor (462 aa).

A signal peptide spans 1 to 22; it reads MEKKFFLSFLFLLPFFMILVIA. Topologically, residues 23 to 140 are extracellular; that stretch reads ESEEENPDDL…NTHEKVKTAL (118 aa). 3 disulfide bridges follow: cysteine 49–cysteine 75, cysteine 66–cysteine 106, and cysteine 89–cysteine 128. N-linked (GlcNAc...) asparagine glycosylation is found at asparagine 67, asparagine 119, and asparagine 124. A helical transmembrane segment spans residues 141-165; sequence NLFYLTIIGHVLSIASLLISLGIFF. Residues 166 to 176 are Cytoplasmic-facing; it reads YFKSLSCQRIT. The chain crosses the membrane as a helical span at residues 177 to 199; it reads LHKNLFFSFVCNSVITIIHLTAV. Over 200-210 the chain is Extracellular; sequence ANNQALVATNP. The chain crosses the membrane as a helical span at residues 211-239; it reads VSCKVSQFIHLYLMGCNYFWMLCEGIYLH. Residues 240 to 253 are Cytoplasmic-facing; that stretch reads TLVVVAVFAEKQHL. Residues 254 to 274 form a helical membrane-spanning segment; it reads MWYYFLGWGFPLIPACIHAVA. At 275–290 the chain is on the extracellular side; it reads RRLYYNDNCWISSDTQ. Residues 289-290 form a required for RAMP3 interaction region; the sequence is TQ. The chain crosses the membrane as a helical span at residues 291-315; the sequence is LLYIIHGPICAALLVNLFFLLNIVR. The Cytoplasmic segment spans residues 316–330; the sequence is VLITKLKVTHQAESN. The chain crosses the membrane as a helical span at residues 331–352; the sequence is LYMKAVRATLILVPLLGIEFVL. Over 353 to 367 the chain is Extracellular; that stretch reads IPWRPEGKIAEEIYD. Residues 368–388 traverse the membrane as a helical segment; it reads YIINILMHYQGLLVSTIFCFF. Over 389–462 the chain is Cytoplasmic; that stretch reads NGEVQAILRR…VVIKPEKLYD (74 aa). Phosphoserine is present on residues serine 421 and serine 446.

It belongs to the G-protein coupled receptor 2 family. In terms of assembly, heterodimer of CALCRL and RAMP1; the receptor complex functions as CGRP receptor. Heterodimer of CALCRL and RAMP2 or CALCRL and RAMP3; the complexes function as adrenomedullin receptor.

Its subcellular location is the cell membrane. In terms of biological role, g protein-coupled receptor which specificity is determined by its interaction with receptor-activity-modifying proteins (RAMPs). Together with RAMP1, form the receptor complex for calcitonin-gene-related peptides CALCA/CGRP1 and CALCB/CGRP2. Together with RAMP2 or RAMP3, function as receptor complexes for adrenomedullin (ADM and ADM2). Ligand binding causes a conformation change that triggers signaling via guanine nucleotide-binding proteins (G proteins) and modulates the activity of downstream effectors. Activates cAMP-dependent pathway. This Bos taurus (Bovine) protein is Calcitonin gene-related peptide type 1 receptor (CALCRL).